Here is a 715-residue protein sequence, read N- to C-terminus: Photosystem I P700 chlorophyll a apoprotein A1 (715 aa).

The next 8 helical transmembrane spans lie at 60–83 (VFSA…FHGA), 146–169 (LYST…FHYH), 185–209 (LNHH…HVSL), 281–299 (TVHH…GHMY), 336–359 (WHAQ…HHMY), 375–401 (LSLF…IFMV), 423–445 (AIIS…LYIH), and 521–539 (FLVH…LILL). Residues C563 and C572 each coordinate [4Fe-4S] cluster. Transmembrane regions (helical) follow at residues 579–600 (HVFL…HFSW) and 654–676 (LSAY…MFLF). Chlorophyll a' is bound at residue H665. Residues M673 and Y681 each coordinate chlorophyll a. W682 is a binding site for phylloquinone. A helical membrane pass occupies residues 714-715 (AE).

Belongs to the PsaA/PsaB family. As to quaternary structure, the PsaA/B heterodimer binds the P700 chlorophyll special pair and subsequent electron acceptors. PSI consists of a core antenna complex that captures photons, and an electron transfer chain that converts photonic excitation into a charge separation. The eukaryotic PSI reaction center is composed of at least 11 subunits. P700 is a chlorophyll a/chlorophyll a' dimer, A0 is one or more chlorophyll a, A1 is one or both phylloquinones and FX is a shared 4Fe-4S iron-sulfur center. is required as a cofactor.

It localises to the plastid. The protein resides in the chloroplast thylakoid membrane. It catalyses the reaction reduced [plastocyanin] + hnu + oxidized [2Fe-2S]-[ferredoxin] = oxidized [plastocyanin] + reduced [2Fe-2S]-[ferredoxin]. Functionally, psaA and PsaB bind P700, the primary electron donor of photosystem I (PSI), as well as the electron acceptors A0, A1 and FX. PSI is a plastocyanin-ferredoxin oxidoreductase, converting photonic excitation into a charge separation, which transfers an electron from the donor P700 chlorophyll pair to the spectroscopically characterized acceptors A0, A1, FX, FA and FB in turn. Oxidized P700 is reduced on the lumenal side of the thylakoid membrane by plastocyanin. The protein is Photosystem I P700 chlorophyll a apoprotein A1 of Phlegmariurus squarrosus (Rock tassel fern).